The sequence spans 276 residues: NH(3)-dependent NAD(+) synthetase (276 aa).

43 to 50 serves as a coordination point for ATP; it reads GISGGVDS. Position 49 (D49) interacts with Mg(2+). Residue R146 coordinates deamido-NAD(+). Position 166 (T166) interacts with ATP. Mg(2+) is bound at residue E171. The deamido-NAD(+) site is built by K179 and D186. Residues K195 and T217 each contribute to the ATP site. 266 to 267 is a deamido-NAD(+) binding site; it reads HK.

Belongs to the NAD synthetase family. As to quaternary structure, homodimer.

It catalyses the reaction deamido-NAD(+) + NH4(+) + ATP = AMP + diphosphate + NAD(+) + H(+). Its pathway is cofactor biosynthesis; NAD(+) biosynthesis; NAD(+) from deamido-NAD(+) (ammonia route): step 1/1. Functionally, catalyzes the ATP-dependent amidation of deamido-NAD to form NAD. Uses ammonia as a nitrogen source. The sequence is that of NH(3)-dependent NAD(+) synthetase from Shewanella oneidensis (strain ATCC 700550 / JCM 31522 / CIP 106686 / LMG 19005 / NCIMB 14063 / MR-1).